The chain runs to 1045 residues: Protein transport protein Sec16B (1045 aa).

Positions 1–13 are enriched in pro residues; it reads MEPWVPQWPPPSR. The tract at residues 1-78 is disordered; the sequence is MEPWVPQWPP…PQHVPRLGAW (78 aa). Basic and acidic residues predominate over residues 22-33; the sequence is DSERGLQRDGYH. Polar residues predominate over residues 50-60; it reads QDVQGSPQPQQ. 2 positions are modified to phosphoserine: S55 and S137. The span at 149–168 shows a compositional bias: basic and acidic residues; it reads RHLSEHRPENQSRTFRRDSE. Disordered stretches follow at residues 149 to 193, 707 to 733, 748 to 789, and 813 to 1045; these read RHLS…QERP, QQKA…TTES, APGC…YSVP, and QTHS…TQPC. S186 is modified (phosphoserine). The interval 267-711 is central conserved domain (CCD); required for localization to endoplasmic reticulum exit sites; the sequence is APKKFYIPHV…RHQELQQKAA (445 aa). The span at 773–784 shows a compositional bias: low complexity; that stretch reads GPAAGPAGAPVP. S852, S858, S866, and S867 each carry phosphoserine. Acidic residues predominate over residues 916 to 926; that stretch reads EDSSDSPDSEQ. A compositionally biased stretch (pro residues) spans 942–953; the sequence is SPPPLLESPPLP. The span at 957–966 shows a compositional bias: gly residues; the sequence is AFGGGTGRGE. Residues 989–998 show a composition bias toward polar residues; that stretch reads ESASSELYSN.

The protein belongs to the SEC16 family. SEC16A and SEC16B are each present in multiple copies in a heteromeric complex. Interacts with TFG. Interacts with SEC13. In terms of tissue distribution, liver.

The protein localises to the endoplasmic reticulum membrane. It is found in the golgi apparatus membrane. In terms of biological role, plays a role in the organization of the endoplasmic reticulum exit sites (ERES), also known as transitional endoplasmic reticulum (tER). Required for secretory cargo traffic from the endoplasmic reticulum to the Golgi apparatus. Involved in peroxisome biogenesis. Regulates the transport of peroxisomal biogenesis factors PEX3 and PEX16 from the ER to peroxisomes. This is Protein transport protein Sec16B (SEC16B) from Oryctolagus cuniculus (Rabbit).